Consider the following 56-residue polypeptide: Ovomucoid (56 aa).

One can recognise a Kazal-like domain in the interval 6–56 (VDCSEYPKPACTMEQRPLCGSDNKTYGNKCNFCNAVVESNGTLTLSHFGKC). Cystine bridges form between cysteine 8–cysteine 38, cysteine 16–cysteine 35, and cysteine 24–cysteine 56. N-linked (GlcNAc...) asparagine glycosylation is present at asparagine 45.

Its subcellular location is the secreted. The sequence is that of Ovomucoid from Afropavo congensis (Congo peafowl).